The chain runs to 112 residues: Small ribosomal subunit protein uS17 (112 aa).

This sequence belongs to the universal ribosomal protein uS17 family. In terms of assembly, part of the 30S ribosomal subunit.

One of the primary rRNA binding proteins, it binds specifically to the 5'-end of 16S ribosomal RNA. The protein is Small ribosomal subunit protein uS17 of Thermotoga neapolitana (strain ATCC 49049 / DSM 4359 / NBRC 107923 / NS-E).